We begin with the raw amino-acid sequence, 416 residues long: CinA-like protein (416 aa).

The protein belongs to the CinA family.

The protein is CinA-like protein of Synechocystis sp. (strain ATCC 27184 / PCC 6803 / Kazusa).